The primary structure comprises 521 residues: MSFTFLDWPRAEIFSSVSYLGLLLSGTVLYTVYKLIIAIYNYFFHPLRKIPGPPLASISWVPWYKYWFSGYMHRHVTRLHETYGPVVRIGPSEISFISATAWKDIYGLKRCRQIERDPQSFPSLTPNGARFDVLTYSPIDHAKYRKILNPCFSEKATREYERTIHENVDKLVAKLEQNISRGQKKNGSRENVTNWFQWLTFDMVTDVCWGRSFECVANEKSHVCLALSMDLVSYSSFIVFVAWWKGLKDFLVKLSGVEGLFVHLVRSKCEEHHLIAAGNELTGEKGKASIYSNLRAAGDPLDLAELDGNLTAIVIAGSETTGFALTATSYYLAKNPACFRRAASEVRSAFASAEEINDDALRKLPYLKAAIEEALRMTPAEPNGLARKVVVDGGLDIAGEWIPKGTAIYVSQFAANRSSAYFHLPNEYHPERWLGEECPKEFRTDKLDAVQPFIMGVNVCIGRGLAWMEMRVTLAKLLWHFDWTVKGGDGEAFEQAKAWHVWTKSHVNLQLHRRGALYGDL.

Residues 19–39 form a helical membrane-spanning segment; the sequence is YLGLLLSGTVLYTVYKLIIAI. 5 N-linked (GlcNAc...) asparagine glycosylation sites follow: Asn178, Asn186, Asn191, Asn309, and Asn416. Cys460 is a binding site for heme.

The protein belongs to the cytochrome P450 family. The cofactor is heme.

The protein resides in the membrane. It participates in antibiotic biosynthesis. Functionally, cytochrome P450 monooxygenase; part of the gene cluster that mediates the biosynthesis of sordarin and hypoxysordarin, glycoside antibiotics with a unique tetracyclic diterpene aglycone structure. First, the geranylgeranyl diphosphate synthase sdnC constructs GGDP from farnesyl diphosphate and isopentenyl diphosphate. The diterpene cyclase sdnA then catalyzes the cyclization of GGDP to afford cycloaraneosene. Cycloaraneosene is then hydroxylated four times by the putative cytochrome P450 monooxygenases sdnB, sdnE, sdnF and sdnH to give a hydroxylated cycloaraneosene derivative such as cycloaraneosene-8,9,13,19-tetraol. Although the order of the hydroxylations is unclear, at least C8, C9 and C13 of the cycloaraneosene skeleton are hydroxylated before the sordaricin formation. Dehydration of the 13-hydroxy group of the hydroxylated cycloaraneosene derivative might be catalyzed by an unassigned hypothetical protein such as sdnG and sdnP to construct the cyclopentadiene moiety. The FAD-dependent oxidoreductase sdnN is proposed to catalyze the oxidation at C9 of the hydroxylated cycloaraneosene derivative and also catalyze the Baeyer-Villiger oxidation to give the lactone intermediate. The presumed lactone intermediate would be hydrolyzed to give an acrolein moiety and a carboxylate moiety. Then, [4+2]cycloaddition would occur between the acrolein moiety and the cyclopentadiene moiety to give sordaricin. SdnN might also be involved in the [4+2]cycloaddition after the hypothesized oxidation to accommodate the oxidized product and prompt the [4+2]cycloaddition. GDP-6-deoxy-D-altrose may be biosynthesized from GDP-D-mannose by the putative GDP-mannose-4,6-dehydratase sdnI and the short-chain dehydrogenase sdnK. The glycosyltransferase sdnJ catalyzes the attachment of 6-deoxy-D-altrose onto the 19-hydroxy group of sordaricin to give 4'-O-demethylsordarin. The methyltransferase sdnD would complete the biosynthesis of sordarin. Sordarin can be further modified into hypoxysordarin. The unique acyl chain at the 3'-hydroxy group of hypoxysordarin would be constructed by an iterative type I PKS sdnO and the trans-acting polyketide methyltransferase sdnL. SdnL would be responsible for the introduction of an alpha-methyl group of the polyketide chain. Alternatively, the beta-lactamase-like protein sdnR might be responsible for the cleavage and transfer of the polyketide chain from the PKS sdnO to sordarin. Two putative cytochrome P450 monooxygenases, sdnQ and sdnT, might catalyze the epoxidations of the polyketide chain to complete the biosynthesis of hypoxysordarin. Transcriptional regulators sdnM and sdnS are presumably encoded for the transcriptional regulation of the expression of the sdn gene cluster. This chain is Cytochrome P450 monooxygenase sdnF, found in Sordaria araneosa (Pleurage araneosa).